Reading from the N-terminus, the 188-residue chain is Auxin-induced protein 22C (188 aa).

Residues 13-17 (LRLGL) carry the EAR-like (transcriptional repression) motif. Residues 16 to 57 (GLPGAGGENNTDKDKNKNKKRVFSDIEGENSSSEEDGKKETK) are disordered. The region spanning 79-167 (KLYVKVSMDG…KRLRIMKRSD (89 aa)) is the PB1 domain.

The protein belongs to the Aux/IAA family. In terms of assembly, homodimers and heterodimers.

It is found in the nucleus. Its function is as follows. Aux/IAA proteins are short-lived transcriptional factors that function as repressors of early auxin response genes at low auxin concentrations. Repression is thought to result from the interaction with auxin response factors (ARFs), proteins that bind to the auxin-responsive promoter element (AuxRE). Formation of heterodimers with ARF proteins may alter their ability to modulate early auxin response genes expression. The chain is Auxin-induced protein 22C (AUX22C) from Vigna radiata var. radiata (Mung bean).